The chain runs to 382 residues: D-galactonate dehydratase (382 aa).

Asp183 contributes to the Mg(2+) binding site. The active-site Proton donor is the His185. Glu209 and Glu235 together coordinate Mg(2+). His285 (proton acceptor) is an active-site residue.

It belongs to the mandelate racemase/muconate lactonizing enzyme family. GalD subfamily. Requires Mg(2+) as cofactor.

It carries out the reaction D-galactonate = 2-dehydro-3-deoxy-D-galactonate + H2O. It participates in carbohydrate acid metabolism; D-galactonate degradation; D-glyceraldehyde 3-phosphate and pyruvate from D-galactonate: step 1/3. Functionally, catalyzes the dehydration of D-galactonate to 2-keto-3-deoxy-D-galactonate. The chain is D-galactonate dehydratase from Salmonella gallinarum (strain 287/91 / NCTC 13346).